A 246-amino-acid polypeptide reads, in one-letter code: Probable chemoreceptor glutamine deamidase CheD (246 aa).

The interval Gly225–Lys246 is disordered.

It belongs to the CheD family.

The catalysed reaction is L-glutaminyl-[protein] + H2O = L-glutamyl-[protein] + NH4(+). Its function is as follows. Probably deamidates glutamine residues to glutamate on methyl-accepting chemotaxis receptors (MCPs), playing an important role in chemotaxis. This Burkholderia vietnamiensis (strain G4 / LMG 22486) (Burkholderia cepacia (strain R1808)) protein is Probable chemoreceptor glutamine deamidase CheD.